Consider the following 83-residue polypeptide: Three-finger toxin MALT0058C (83 aa).

The N-terminal stretch at 1–21 (MKTLLLTLVVVTIVCLDFGHT) is a signal peptide. 4 disulfides stabilise this stretch: cysteine 24–cysteine 45, cysteine 38–cysteine 62, cysteine 64–cysteine 75, and cysteine 76–cysteine 81.

It belongs to the three-finger toxin family. Short-chain subfamily. Type I alpha-neurotoxin sub-subfamily. As to expression, expressed by the venom gland.

The protein localises to the secreted. Binds to muscle nicotinic acetylcholine receptor (nAChR) and inhibits acetylcholine from binding to the receptor, thereby impairing neuromuscular transmission. The chain is Three-finger toxin MALT0058C from Micrurus altirostris (Uruguayan coral snake).